A 366-amino-acid polypeptide reads, in one-letter code: Small ribosomal subunit biogenesis GTPase RsgA (366 aa).

One can recognise a CP-type G domain in the interval 107 to 266 (RSEGQILAAN…LIDTPGLRGV (160 aa)). Residues 154–157 (TKAD) and 208–216 (GQSGAGKST) contribute to the GTP site. Residues Cys-289, Cys-294, His-296, and Cys-302 each contribute to the Zn(2+) site.

Belongs to the TRAFAC class YlqF/YawG GTPase family. RsgA subfamily. As to quaternary structure, monomer. Associates with 30S ribosomal subunit, binds 16S rRNA. It depends on Zn(2+) as a cofactor.

It localises to the cytoplasm. In terms of biological role, one of several proteins that assist in the late maturation steps of the functional core of the 30S ribosomal subunit. Helps release RbfA from mature subunits. May play a role in the assembly of ribosomal proteins into the subunit. Circularly permuted GTPase that catalyzes slow GTP hydrolysis, GTPase activity is stimulated by the 30S ribosomal subunit. The chain is Small ribosomal subunit biogenesis GTPase RsgA from Streptomyces coelicolor (strain ATCC BAA-471 / A3(2) / M145).